Reading from the N-terminus, the 986-residue chain is Isoleucine--tRNA ligase (986 aa).

The short motif at 534 to 538 (EMHKS) is the 'KMSKS' region element. Lys-537 serves as a coordination point for ATP.

It belongs to the class-I aminoacyl-tRNA synthetase family. IleS type 2 subfamily. Monomer. Zn(2+) serves as cofactor.

The protein localises to the cytoplasm. It carries out the reaction tRNA(Ile) + L-isoleucine + ATP = L-isoleucyl-tRNA(Ile) + AMP + diphosphate. Its function is as follows. Catalyzes the attachment of isoleucine to tRNA(Ile). As IleRS can inadvertently accommodate and process structurally similar amino acids such as valine, to avoid such errors it has two additional distinct tRNA(Ile)-dependent editing activities. One activity is designated as 'pretransfer' editing and involves the hydrolysis of activated Val-AMP. The other activity is designated 'posttransfer' editing and involves deacylation of mischarged Val-tRNA(Ile). This Saccharolobus solfataricus (strain ATCC 35092 / DSM 1617 / JCM 11322 / P2) (Sulfolobus solfataricus) protein is Isoleucine--tRNA ligase (ileS).